The primary structure comprises 427 residues: Citrate synthase (427 aa).

Lys283 carries the N6-acetyllysine modification. Residues His306 and Asp363 contribute to the active site.

Belongs to the citrate synthase family. As to quaternary structure, homohexamer.

The enzyme catalyses oxaloacetate + acetyl-CoA + H2O = citrate + CoA + H(+). Its pathway is carbohydrate metabolism; tricarboxylic acid cycle; isocitrate from oxaloacetate: step 1/2. The sequence is that of Citrate synthase (gltA) from Escherichia coli O6:H1 (strain CFT073 / ATCC 700928 / UPEC).